We begin with the raw amino-acid sequence, 459 residues long: Xylose/arabinose-binding protein XacG (459 aa).

Residues 19–36 traverse the membrane as a helical segment; the sequence is ALTVGAAAGIAGCTGGGG. Residues 27 to 68 are disordered; that stretch reads GIAGCTGGGGTETESTESGNGNGSGGSTDDTETSGSSSGESW.

It belongs to the bacterial solute-binding protein 1 family. In terms of assembly, the complex is composed of two ATP-binding proteins (XacJ and XacK), two transmembrane proteins (XacH and XacI) and a solute-binding protein (XacG).

Its subcellular location is the cell membrane. In terms of biological role, part of the ABC transporter complex XacGHIJK involved in the uptake of xylose and arabinose. The polypeptide is Xylose/arabinose-binding protein XacG (Haloferax volcanii (strain ATCC 29605 / DSM 3757 / JCM 8879 / NBRC 14742 / NCIMB 2012 / VKM B-1768 / DS2) (Halobacterium volcanii)).